Consider the following 298-residue polypeptide: Centromere protein O (298 aa).

Residues 29–49 (NISNRKSEEPAVRKKESSLRT) are disordered. Basic and acidic residues predominate over residues 33–49 (RKSEEPAVRKKESSLRT). Position 35 is a phosphoserine (serine 35). Positions 39–74 (AVRKKESSLRTKIRELRQQRDKLRAEVKQWGARVKE) form a coiled coil.

It belongs to the CENP-O/MCM21 family. As to quaternary structure, component of the CENPA-CAD complex, composed of CENPI, CENPK, CENPL, CENPO, CENPP, CENPQ, CENPR and CENPS. The CENPA-CAD complex interacts with the CENPA-NAC complex, at least composed of CENPA, CENPC, CENPH, CENPM, CENPN, CENPT and CENPU.

Its subcellular location is the nucleus. It localises to the chromosome. The protein localises to the centromere. The protein resides in the kinetochore. In terms of biological role, component of the CENPA-CAD (nucleosome distal) complex, a complex recruited to centromeres which is involved in assembly of kinetochore proteins, mitotic progression and chromosome segregation. May be involved in incorporation of newly synthesized CENPA into centromeres via its interaction with the CENPA-NAC complex. Modulates the kinetochore-bound levels of NDC80 complex. This is Centromere protein O (Cenpo) from Mus musculus (Mouse).